Consider the following 276-residue polypeptide: C-type lectin domain family 12 member B (276 aa).

Residues 1–43 (MSEDMTYATLTFQDSVAAGNNQDRNNLRKRGYPAPSSIWRQAA) lie on the Cytoplasmic side of the membrane. Residues 5 to 10 (MTYATL) carry the ITIM motif motif. A Phosphotyrosine modification is found at Tyr7. A helical; Signal-anchor for type II membrane protein transmembrane segment spans residues 44-64 (LGLLTLCVMLLIGLVTLGIMF). The Extracellular portion of the chain corresponds to 65–276 (LQMSSEINSD…AALVKIEDLD (212 aa)). N-linked (GlcNAc...) asparagine glycosylation is found at Asn91, Asn176, and Asn237. One can recognise a C-type lectin domain in the interval 150 to 264 (YQTSCYYFAV…CSAEISWICE (115 aa)). 2 cysteine pairs are disulfide-bonded: Cys172-Cys263 and Cys242-Cys255.

In terms of assembly, homodimer. Interacts (via ITIM motif) with PTPN6. Interacts (via ITIM motif) with PTPN11; this interaction triggers dephosphorylation and activation of PTPN11.

It is found in the cell membrane. Functionally, inhibitory receptor postulated to negatively regulate immune and non-immune functions. Upon phosphorylation, recruits SH2 domain-containing PTPN6 and PTPN11 phosphatases to its ITIM motif and antagonizes activation signals. Although it inhibits KLRK1/NKG2D-mediated signaling, it does not bind known ligands of KLRK1/NKG2D and therefore is not its inhibitory counterpart. May limit activation of myeloid cell subsets in response to infection or tissue inflammation. May protect target cells against natural killer cell-mediated lysis. May negatively regulate cell cycle and differentiation of melanocytes via inactivation of STAT3. This chain is C-type lectin domain family 12 member B (CLEC12B), found in Bos taurus (Bovine).